The chain runs to 265 residues: Tryptophan synthase alpha chain (265 aa).

Catalysis depends on proton acceptor residues Glu48 and Asp59.

The protein belongs to the TrpA family. In terms of assembly, tetramer of two alpha and two beta chains.

The catalysed reaction is (1S,2R)-1-C-(indol-3-yl)glycerol 3-phosphate + L-serine = D-glyceraldehyde 3-phosphate + L-tryptophan + H2O. It participates in amino-acid biosynthesis; L-tryptophan biosynthesis; L-tryptophan from chorismate: step 5/5. Functionally, the alpha subunit is responsible for the aldol cleavage of indoleglycerol phosphate to indole and glyceraldehyde 3-phosphate. The polypeptide is Tryptophan synthase alpha chain (Pelagibacter ubique (strain HTCC1062)).